The primary structure comprises 243 residues: Cell division protein ZipA (243 aa).

Residues 1-4 lie on the Periplasmic side of the membrane; that stretch reads MSDM. The helical transmembrane segment at 5–25 threads the bilayer; sequence AMIRIGILIAGLLLVAAIFLF. Residues 26 to 243 are Cytoplasmic-facing; that stretch reads GRPKKSPQGR…APPLTKSPRW (218 aa). The interval 30-89 is disordered; sequence KSPQGRRVDKGEGQPRERREPVISSEFGAEGDAAERAEGVEQSELNLEGQDASGGNEVGK. Positions 35 to 50 are enriched in basic and acidic residues; that stretch reads RRVDKGEGQPRERREP.

It belongs to the ZipA family. In terms of assembly, interacts with FtsZ via their C-terminal domains.

Its subcellular location is the cell inner membrane. Functionally, essential cell division protein that stabilizes the FtsZ protofilaments by cross-linking them and that serves as a cytoplasmic membrane anchor for the Z ring. Also required for the recruitment to the septal ring of downstream cell division proteins. The protein is Cell division protein ZipA of Xanthomonas axonopodis pv. citri (strain 306).